A 322-amino-acid polypeptide reads, in one-letter code: Phosphatidylserine decarboxylase proenzyme (322 aa).

Catalysis depends on charge relay system; for autoendoproteolytic cleavage activity residues Asp90, His147, and Ser254. Ser254 acts as the Schiff-base intermediate with substrate; via pyruvic acid; for decarboxylase activity in catalysis. The residue at position 254 (Ser254) is a Pyruvic acid (Ser); by autocatalysis. The interval 292–322 is disordered; the sequence is TPDAEPSPLPAEEIEAEHDASPLVDDKKDQV. Positions 308 to 322 are enriched in basic and acidic residues; sequence EHDASPLVDDKKDQV.

The protein belongs to the phosphatidylserine decarboxylase family. PSD-B subfamily. Prokaryotic type I sub-subfamily. As to quaternary structure, heterodimer of a large membrane-associated beta subunit and a small pyruvoyl-containing alpha subunit. Pyruvate is required as a cofactor. In terms of processing, is synthesized initially as an inactive proenzyme. Formation of the active enzyme involves a self-maturation process in which the active site pyruvoyl group is generated from an internal serine residue via an autocatalytic post-translational modification. Two non-identical subunits are generated from the proenzyme in this reaction, and the pyruvate is formed at the N-terminus of the alpha chain, which is derived from the carboxyl end of the proenzyme. The autoendoproteolytic cleavage occurs by a canonical serine protease mechanism, in which the side chain hydroxyl group of the serine supplies its oxygen atom to form the C-terminus of the beta chain, while the remainder of the serine residue undergoes an oxidative deamination to produce ammonia and the pyruvoyl prosthetic group on the alpha chain. During this reaction, the Ser that is part of the protease active site of the proenzyme becomes the pyruvoyl prosthetic group, which constitutes an essential element of the active site of the mature decarboxylase.

The protein resides in the cell membrane. The catalysed reaction is a 1,2-diacyl-sn-glycero-3-phospho-L-serine + H(+) = a 1,2-diacyl-sn-glycero-3-phosphoethanolamine + CO2. The protein operates within phospholipid metabolism; phosphatidylethanolamine biosynthesis; phosphatidylethanolamine from CDP-diacylglycerol: step 2/2. Its function is as follows. Catalyzes the formation of phosphatidylethanolamine (PtdEtn) from phosphatidylserine (PtdSer). This Escherichia coli O7:K1 (strain IAI39 / ExPEC) protein is Phosphatidylserine decarboxylase proenzyme.